The chain runs to 96 residues: MDYTQILIKPVISEKATDIKEAANQVAFYVLPSANKTEVKKAVESAFDVKVDSVRIVRKRPGLRRKFGRVVGKLSGYKKAYVKLSEGEKIEFFEGV.

The protein belongs to the universal ribosomal protein uL23 family. As to quaternary structure, part of the 50S ribosomal subunit. Contacts protein L29, and trigger factor when it is bound to the ribosome.

One of the early assembly proteins it binds 23S rRNA. One of the proteins that surrounds the polypeptide exit tunnel on the outside of the ribosome. Forms the main docking site for trigger factor binding to the ribosome. This chain is Large ribosomal subunit protein uL23, found in Maridesulfovibrio salexigens (strain ATCC 14822 / DSM 2638 / NCIMB 8403 / VKM B-1763) (Desulfovibrio salexigens).